The following is a 385-amino-acid chain: SH3 domain-binding protein 5-like (385 aa).

The tract at residues 1–58 (MAELRQIPGGRETPQGELRPEVVEDEVPRSPVAEEPGGGGSNSSEAKLSPREEEELDP) is disordered. Phosphothreonine is present on T13. Over residues 18-28 (LRPEVVEDEVP) the composition is skewed to basic and acidic residues. Phosphoserine is present on residues S30 and S49. Coiled coils occupy residues 59–140 (RIQE…YERA) and 169–272 (WQEM…EQIH). The tract at residues 272–328 (HARRRGQPAHTPGQRRSSPVGAEAGPDGGEDADSGIIEGAEGGGLEEGVSLGPGAAP) is disordered. A compositionally biased stretch (low complexity) spans 318–328 (EGVSLGPGAAP). A phosphoserine mark is found at S343, S350, S358, and S362. The tract at residues 359–385 (DHTSLDGQELGPRSGGRGGRHQRSISL) is disordered. Positions 376 to 385 (GGRHQRSISL) are enriched in basic residues.

This sequence belongs to the SH3BP5 family.

In terms of biological role, functions as a guanine nucleotide exchange factor (GEF) for RAB11A. The protein is SH3 domain-binding protein 5-like (SH3BP5L) of Bos taurus (Bovine).